We begin with the raw amino-acid sequence, 477 residues long: Glycogen synthase (477 aa).

Residue lysine 15 coordinates ADP-alpha-D-glucose.

It belongs to the glycosyltransferase 1 family. Bacterial/plant glycogen synthase subfamily.

The enzyme catalyses [(1-&gt;4)-alpha-D-glucosyl](n) + ADP-alpha-D-glucose = [(1-&gt;4)-alpha-D-glucosyl](n+1) + ADP + H(+). The protein operates within glycan biosynthesis; glycogen biosynthesis. In terms of biological role, synthesizes alpha-1,4-glucan chains using ADP-glucose. This chain is Glycogen synthase, found in Streptococcus pneumoniae serotype 19F (strain G54).